A 552-amino-acid polypeptide reads, in one-letter code: Scavenger receptor class B member 1 (552 aa).

The Cytoplasmic segment spans residues 1–11 (MGCSAKARWAA). Residues 12–32 (GALGVAGLLCAVLGAVMIVMV) form a helical membrane-spanning segment. At 33 to 443 (PSLIKQQVLK…LVLMPKVMHY (411 aa)) the chain is on the extracellular side. Residues Asn-102, Asn-108, Asn-173, Asn-212, Asn-227, Asn-255, Asn-310, Asn-330, and Asn-383 are each glycosylated (N-linked (GlcNAc...) asparagine). Cys-251 and Cys-384 are joined by a disulfide. 2 positions are modified to phosphoserine: Tyr-393 and Val-458. Residues 444 to 464 (AQYVLLALGCVLLLVPVICQI) form a helical membrane-spanning segment. Cys-462 carries the S-palmitoyl cysteine lipid modification. The Cytoplasmic segment spans residues 465–552 (RSQVGAGQRA…GPSLGGGTGS (88 aa)). The residue at position 493 (Thr-493) is a Phosphoserine.

This sequence belongs to the CD36 family. In terms of assembly, the C-terminal region binds to PDZK1. (Microbial infection) Interacts with hepatitis C virus E1:E2 glycoproteins. N-glycosylated. Post-translationally, the six cysteines of the extracellular domain are all involved in intramolecular disulfide bonds. In terms of tissue distribution, widely expressed.

It is found in the cell membrane. The protein resides in the membrane. The protein localises to the caveola. In terms of biological role, receptor for different ligands such as phospholipids, cholesterol ester, lipoproteins, phosphatidylserine and apoptotic cells. Receptor for HDL, mediating selective uptake of cholesteryl ether and HDL-dependent cholesterol efflux. Also facilitates the flux of free and esterified cholesterol between the cell surface and apoB-containing lipoproteins and modified lipoproteins, although less efficiently than HDL. May be involved in the phagocytosis of apoptotic cells, via its phosphatidylserine binding activity. Functionally, (Microbial infection) Acts as a receptor for hepatitis C virus in hepatocytes and appears to facilitate its cell entry. Binding between SCARB1 and the hepatitis C virus glycoprotein E2 is independent of the genotype of the viral isolate. Its function is as follows. (Microbial infection) Mediates uptake of M.fortuitum, E.coli and S.aureus. (Microbial infection) Facilitates the entry of human coronavirus SARS-CoV-2 by acting as an entry cofactor through HDL binding. The protein is Scavenger receptor class B member 1 (SCARB1) of Homo sapiens (Human).